The primary structure comprises 172 residues: Bone marrow stromal antigen 2 (172 aa).

Residues 1–26 are Cytoplasmic-facing; it reads MAPSFYHYLPVAMDERWEPKGWSIRR. Residue lysine 20 forms a Glycyl lysine isopeptide (Lys-Gly) (interchain with G-Cter in ubiquitin) linkage. The helical; Signal-anchor for type II membrane protein transmembrane segment at 27–47 threads the bilayer; it reads WWLVAAILVVLIGVVLVCLIV. The Extracellular portion of the chain corresponds to 48-152; that stretch reads YFANAAHSEA…EISTTVQVNS (105 aa). Asparagine 70 and asparagine 97 each carry an N-linked (GlcNAc...) asparagine glycan. Residues 103 to 149 are a coiled coil; it reads LRDSLKKKVSQTQEQQARIKELENKIERLNQELENLRTQKEISTTVQ. Serine 152 carries GPI-anchor amidated serine lipidation. The propeptide at 153–172 is removed in mature form; the sequence is GGSVVVSSLLVLVAVLFLHF.

As to quaternary structure, parallel homodimer; disulfide-linked. May form homotetramers under reducing conditions. Isoform 1 and isoform 2 form homodimers and also heterodimers with each other. Dimerization is essential for its antiviral activity. Interacts (via cytoplasmic domain) with ARHGAP44. Interacts with MMP14 (via C-terminal cytoplasmic tail). Interacts with LILRA4/ILT7. Interacts with RNF115. N-glycosylated. Post-translationally, the GPI anchor is essential for its antiviral activity. In terms of tissue distribution, ubiquitously expressed, with highest levels in brain and liver. Present in liver (at protein level).

The protein localises to the golgi apparatus. The protein resides in the trans-Golgi network. It is found in the cell membrane. It localises to the late endosome. Its subcellular location is the membrane raft. The protein localises to the cytoplasm. The protein resides in the apical cell membrane. IFN-induced antiviral host restriction factor which efficiently blocks the release of diverse mammalian enveloped viruses by directly tethering nascent virions to the membranes of infected cells. Acts as a direct physical tether, holding virions to the cell membrane and linking virions to each other. The tethered virions can be internalized by endocytosis and subsequently degraded or they can remain on the cell surface. In either case, their spread as cell-free virions is restricted. Its target viruses belong to diverse families, including retroviridae: human immunodeficiency virus type 1 (HIV-1), mouse mammary tumor virus (MMTV) and murine leukemia virus (MLV), filoviridae: ebola virus (EBOV), arenaviridae: lassa virus (LASV), and rhabdoviridae: vesicular stomatitis virus (VSV). Can inhibit cell surface proteolytic activity of MMP14 causing decreased activation of MMP15 which results in inhibition of cell growth and migration. Can stimulate signaling by LILRA4/ILT7 and consequently provide negative feedback to the production of IFN by plasmacytoid dendritic cells in response to viral infection. Plays a role in the organization of the subapical actin cytoskeleton in polarized epithelial cells. This chain is Bone marrow stromal antigen 2 (Bst2), found in Rattus norvegicus (Rat).